We begin with the raw amino-acid sequence, 280 residues long: Energy-coupling factor transporter ATP-binding protein EcfA1 (280 aa).

The ABC transporter domain occupies 6–244; it reads IECKNVVYKY…VPLMKNIGLD (239 aa). An ATP-binding site is contributed by 43–50; the sequence is GHNGSGKS.

The protein belongs to the ABC transporter superfamily. Energy-coupling factor EcfA family. As to quaternary structure, forms a stable energy-coupling factor (ECF) transporter complex composed of 2 membrane-embedded substrate-binding proteins (S component), 2 ATP-binding proteins (A component) and 2 transmembrane proteins (T component).

The protein localises to the cell membrane. In terms of biological role, ATP-binding (A) component of a common energy-coupling factor (ECF) ABC-transporter complex. Unlike classic ABC transporters this ECF transporter provides the energy necessary to transport a number of different substrates. The sequence is that of Energy-coupling factor transporter ATP-binding protein EcfA1 from Clostridium novyi (strain NT).